The following is a 255-amino-acid chain: Large ribosomal subunit protein uL2 (255 aa).

Residues 211 to 235 (PHGGGNHQHVGHATTTKRDDPAGKK) form a disordered region.

Belongs to the universal ribosomal protein uL2 family.

This Dictyostelium discoideum (Social amoeba) protein is Large ribosomal subunit protein uL2 (rpl8).